Consider the following 153-residue polypeptide: Myoglobin (153 aa).

Positions 2–147 (GLNDQEWQQV…FRNDMASKYK (146 aa)) constitute a Globin domain. His-65 lines the nitrite pocket. An O2-binding site is contributed by His-65. His-93 contacts heme b.

Belongs to the globin family. In terms of assembly, monomeric.

The protein resides in the cytoplasm. It is found in the sarcoplasm. The catalysed reaction is Fe(III)-heme b-[protein] + nitric oxide + H2O = Fe(II)-heme b-[protein] + nitrite + 2 H(+). It carries out the reaction H2O2 + AH2 = A + 2 H2O. Monomeric heme protein which primary function is to store oxygen and facilitate its diffusion within muscle tissues. Reversibly binds oxygen through a pentacoordinated heme iron and enables its timely and efficient release as needed during periods of heightened demand. Depending on the oxidative conditions of tissues and cells, and in addition to its ability to bind oxygen, it also has a nitrite reductase activity whereby it regulates the production of bioactive nitric oxide. Under stress conditions, like hypoxia and anoxia, it also protects cells against reactive oxygen species thanks to its pseudoperoxidase activity. This is Myoglobin (MB) from Aptenodytes forsteri (Emperor penguin).